The primary structure comprises 591 residues: Aspartate--tRNA(Asp/Asn) ligase (591 aa).

Residue glutamate 176 participates in L-aspartate binding. Positions 200–203 are aspartate; sequence QLFK. Arginine 222 contributes to the L-aspartate binding site. Residues 222–224 and glutamine 231 each bind ATP; that span reads RDE. Histidine 450 lines the L-aspartate pocket. Glutamate 484 lines the ATP pocket. Residue arginine 491 coordinates L-aspartate. 536–539 contributes to the ATP binding site; that stretch reads GLDR.

The protein belongs to the class-II aminoacyl-tRNA synthetase family. Type 1 subfamily. In terms of assembly, homodimer.

The protein resides in the cytoplasm. It carries out the reaction tRNA(Asx) + L-aspartate + ATP = L-aspartyl-tRNA(Asx) + AMP + diphosphate. Its function is as follows. Aspartyl-tRNA synthetase with relaxed tRNA specificity since it is able to aspartylate not only its cognate tRNA(Asp) but also tRNA(Asn). Reaction proceeds in two steps: L-aspartate is first activated by ATP to form Asp-AMP and then transferred to the acceptor end of tRNA(Asp/Asn). This is Aspartate--tRNA(Asp/Asn) ligase from Bacillus cereus (strain ATCC 14579 / DSM 31 / CCUG 7414 / JCM 2152 / NBRC 15305 / NCIMB 9373 / NCTC 2599 / NRRL B-3711).